The sequence spans 428 residues: Bacteriochlorophyll synthase 44.5 kDa chain (428 aa).

The next 12 helical transmembrane spans lie at 3–23 (LGWLQIFRLGLVQLCIGAVVV), 32–52 (LMVVELALPAVLPGALVALHY), 73–93 (FFVILGMAVLALGAFLAAVAV), 115–135 (GFGVGASGTSLLALLASATEP), 144–164 (ITWLLMIFGIAVTAGTVGHFL), 172–192 (LLWIVAIVTLGAVVLTTLAVW), 225–245 (AFTFFLFLSMTAYFLQELILE), 269–289 (GVFFGMLTVGLALSGLKIGSL), 291–311 (GWVVTGCLGSSLALMAIVALG), 317–337 (ALVPAVIGLGFFNGIFAVAAI), 358–378 (LWGAAQAIAAGFGGLVGAGAA), and 393–413 (LVFGAQALLFIVAAMMATGVV).

The protein belongs to the PucC family.

It is found in the membrane. It participates in porphyrin-containing compound metabolism; bacteriochlorophyll biosynthesis (light-independent). In Rhodobacter capsulatus (strain ATCC BAA-309 / NBRC 16581 / SB1003), this protein is Bacteriochlorophyll synthase 44.5 kDa chain.